We begin with the raw amino-acid sequence, 245 residues long: Hydrolase pyvD (245 aa).

Residues cysteine 133, aspartate 179, and histidine 211 contribute to the active site.

This sequence belongs to the dienelactone hydrolase family.

It functions in the pathway secondary metabolite biosynthesis. Its function is as follows. Hydrolase; part of the gene cluster that mediates the biosynthesis of pyranoviolin A, a pyranonigrin analog with a C-3 methoxy group. Initially, the PKS portion of pyvA synthesizes C-10 carbon chain from 5 molecules of malonyl-CoA, which is then condensed with the thiolation (T) domain-bound glycine activated by the adenylation (A) domain. The subsequent chain release by Dieckmann condensation (DKC) could be catalyzed by the TE domain present at the C-terminus of pyvA and/or the alpha/beta hydrolase pyvD, installing the tetramic acid moiety. The FAD-dependent monooxygenase pyvC next epoxidizes one of the olefins of the polyketide part, and the epoxide ring-opening induces the dihydro-gamma-pyrone ring formation. The cytochrome P450 monooxygeanse pyvB would be responsible for the 2 consecutive reactions, in which the dihydro-gamma-pyrone is oxidized to gamma-pyrone and C-7 is hydroxylated to yield pyranonigrin F. Finally, the O-methyltransferase pyvH methylates the C-3 hydroxy group to complete the biosynthesis. In Aspergillus violaceofuscus (strain CBS 115571), this protein is Hydrolase pyvD.